A 327-amino-acid chain; its full sequence is Phenylalanine--tRNA ligase alpha subunit (327 aa).

Residue E252 participates in Mg(2+) binding.

The protein belongs to the class-II aminoacyl-tRNA synthetase family. Phe-tRNA synthetase alpha subunit type 1 subfamily. As to quaternary structure, tetramer of two alpha and two beta subunits. Mg(2+) is required as a cofactor.

Its subcellular location is the cytoplasm. It catalyses the reaction tRNA(Phe) + L-phenylalanine + ATP = L-phenylalanyl-tRNA(Phe) + AMP + diphosphate + H(+). This is Phenylalanine--tRNA ligase alpha subunit from Shewanella putrefaciens (strain CN-32 / ATCC BAA-453).